The primary structure comprises 1231 residues: Fanconi anemia group J protein homolog (1231 aa).

The Helicase ATP-binding domain maps to 11–448 (GGVKILFPCR…SDHEPLRAVC (438 aa)). 46 to 53 (SPTGSGKS) is an ATP binding site. Disordered regions lie at residues 104-126 (TFSS…GASS) and 147-166 (QDDD…DEQL). Over residues 152 to 166 (QTDRKRIRQSHDEQL) the composition is skewed to basic and acidic residues. A Nuclear localization signal motif is present at residues 155-173 (RKRIRQSHDEQLQARKRRC). Residues Cys-291, Cys-304, Cys-316, and Cys-356 each coordinate [4Fe-4S] cluster. The short motif at 399-402 (DEAH) is the DEAH box element. Over residues 890 to 903 (SKNQQQRMQMSSTN) the composition is skewed to polar residues. Disordered stretches follow at residues 890–924 (SKNQ…PTSS), 936–956 (VSEF…PPEI), and 1195–1231 (GNEN…FFLD). Low complexity-rich tracts occupy residues 909–924 (SQGT…PTSS) and 940–954 (TQPT…TSPP). The span at 1206–1217 (KGTEQKNRENRL) shows a compositional bias: basic and acidic residues.

It belongs to the DEAD box helicase family. DEAH subfamily. Requires [4Fe-4S] cluster as cofactor.

It is found in the nucleus. The enzyme catalyses Couples ATP hydrolysis with the unwinding of duplex DNA at the replication fork by translocating in the 5'-3' direction. This creates two antiparallel DNA single strands (ssDNA). The leading ssDNA polymer is the template for DNA polymerase III holoenzyme which synthesizes a continuous strand.. The catalysed reaction is ATP + H2O = ADP + phosphate + H(+). DNA-dependent helicase and 5' to 3' DNA helicase required for the maintenance of chromosomal stability. Involved in the repair of DNA double-strand breaks by homologous recombination. Involved in the repair of abasic sites at replication forks by promoting the degradation of DNA-protein cross-links: acts by catalyzing unfolding of HMCES DNA-protein cross-link via its helicase activity, exposing the underlying DNA and enabling cleavage of the DNA-protein adduct by the SPRTN metalloprotease. The sequence is that of Fanconi anemia group J protein homolog (brip1.L) from Xenopus laevis (African clawed frog).